The chain runs to 66 residues: Alpha-like toxin Bom3 (66 aa).

Residues 2-66 (RDGYIAQPEN…PIVVGGEKCH (65 aa)) enclose the LCN-type CS-alpha/beta domain. Cystine bridges form between C12–C65, C16–C37, C23–C47, and C27–C49.

This sequence belongs to the long (4 C-C) scorpion toxin superfamily. Sodium channel inhibitor family. Alpha subfamily. In terms of tissue distribution, expressed by the venom gland.

It is found in the secreted. Functionally, alpha toxins bind voltage-independently at site-3 of sodium channels (Nav) and inhibit the inactivation of the activated channels, thereby blocking neuronal transmission. As it competes neither with the classical alpha-toxin AaH2 nor the beta-toxin Css2, this toxin is an alpha-like toxin. The protein is Alpha-like toxin Bom3 of Buthus occitanus mardochei (Moroccan scorpion).